Here is a 436-residue protein sequence, read N- to C-terminus: GTPase Der (436 aa).

2 consecutive EngA-type G domains span residues 4–167 (PVVA…PKGG) and 176–351 (IKFC…DNHA). GTP contacts are provided by residues 10–17 (GRPNVGKS), 57–61 (DTGGI), 119–122 (NKID), 182–189 (GRPNVGKS), 229–233 (DTAGM), and 294–297 (NKWD). Positions 352 to 436 (MRVQTNVLNE…PIKIIARPRK (85 aa)) constitute a KH-like domain.

The protein belongs to the TRAFAC class TrmE-Era-EngA-EngB-Septin-like GTPase superfamily. EngA (Der) GTPase family. Associates with the 50S ribosomal subunit.

GTPase that plays an essential role in the late steps of ribosome biogenesis. This chain is GTPase Der, found in Geobacillus kaustophilus (strain HTA426).